We begin with the raw amino-acid sequence, 938 residues long: Glutamate receptor ionotropic, NMDA 1 (938 aa).

A signal peptide spans 1 to 18 (MSTMHLLTFALLFSCSFA). The Extracellular segment spans residues 19 to 559 (RAACDPKIVN…TLDSFMQPFQ (541 aa)). 10 N-linked (GlcNAc...) asparagine glycosylation sites follow: Asn-61, Asn-203, Asn-239, Asn-276, Asn-300, Asn-350, Asn-368, Asn-440, Asn-471, and Asn-491. Cys-79 and Cys-308 are oxidised to a cystine. Cystine bridges form between Cys-420–Cys-454 and Cys-436–Cys-455. Residues Pro-516, Thr-518, and Arg-523 each contribute to the glycine site. The helical transmembrane segment at 560–580 (STLWLLVGLSVHVVAVMLYLL) threads the bilayer. Topologically, residues 581–602 (DRFSPFGRFKVNSEEEEEDALT) are cytoplasmic. An intramembrane region (discontinuously helical) is located at residues 603–624 (LSSAMWFSWGVLLNSGIGEGAP). The segment at 603-624 (LSSAMWFSWGVLLNSGIGEGAP) is pore-forming. At 625–630 (RSFSAR) the chain is on the cytoplasmic side. The helical transmembrane segment at 631-647 (ILGMVWAGFAMIIVASY) threads the bilayer. Residues 648-812 (TANLAAFLVL…NAPATLTFEN (165 aa)) lie on the Extracellular side of the membrane. Residue Asn-674 is glycosylated (N-linked (GlcNAc...) asparagine). Glycine contacts are provided by Ser-688 and Asp-732. Cys-744 and Cys-798 are oxidised to a cystine. Residue Asn-771 is glycosylated (N-linked (GlcNAc...) asparagine). The helical transmembrane segment at 813–833 (MAGVFMLVAGGIVAGIFLIFI) threads the bilayer. The Cytoplasmic portion of the chain corresponds to 834-938 (EIAYKRHKDA…LQLCSRHRES (105 aa)). The residue at position 877 (Lys-877) is a Phosphoserine. Phosphoserine; by PKC occurs at positions 889, 890, 896, and 897. A disordered region spans residues 889–938 (SSFKRRRSSKDTSTGGGRGALQNQKDTVLPRRAIEREEGQLQLCSRHRES). Position 898 is a phosphoserine (Lys-898). A compositionally biased stretch (basic and acidic residues) spans 916–927 (VLPRRAIEREEG).

It belongs to the glutamate-gated ion channel (TC 1.A.10.1) family. NR1/GRIN1 subfamily. Heterotetramer; the NMDAR subunits are modular and harbor tiered domains that function in concert to regulate opening and closing of the cation-selective ion channel pore. Forms heterotetrameric channels composed of two GluN1/zeta subunits (GRIN1), and two identical GluN2/epsilon subunits (GRIN2A, GRIN2B, GRIN2C or GRIN2D) or GluN3 subunits (GRIN3A or GRIN3B) (in vitro). Can also form heterotetrameric channels that contain at least two GluN1 subunits and at least two different GluN2 subunits (or a combination of one GluN2 and one GluN3 subunits) (in vitro). In vivo, the subunit composition may vary in function of the expression levels of the different subunits. Found in a complex with GRIN2A or GRIN2B, GRIN3A and PPP2CB. Found in a complex with GRIN2A or GRIN2B and GRIN3B;. Interacts with SNX27 (via PDZ domain); the interaction is required for recycling to the plasma membrane when endocytosed and prevent degradation in lysosomes. Interacts with DLG4 and MPDZ. Interacts with LRFN1 and LRFN2. Interacts with MYZAP. Found in a complex with DLG4 and PRR7. Found in a complex with GRIN2B and PRR7. Interacts with PRR7; the interaction is reduced following NMDA receptor activity. Post-translationally, NMDA is probably regulated by C-terminal phosphorylation of an isoform of NR1 by PKC. Dephosphorylated on Ser-897 probably by protein phosphatase 2A (PPP2CB). Its phosphorylated state is influenced by the formation of the NMDAR-PPP2CB complex and the NMDAR channel activity. Detected throughout the brain, in brain cortex, cerebellum, thalamus and olfactory bulb.

Its subcellular location is the cell membrane. The protein localises to the postsynaptic cell membrane. It localises to the synaptic cell membrane. The protein resides in the postsynaptic density membrane. It catalyses the reaction Ca(2+)(in) = Ca(2+)(out). The catalysed reaction is Na(+)(in) = Na(+)(out). The enzyme catalyses K(+)(in) = K(+)(out). With respect to regulation, NMDA glutamate receptor activity is potentiated by Zn2(+) in a dose-dependent fashion. The potentiating effect of Zn2(+) is at submicromolar concentrations and its inhibitory action is at high micromolar to millimolar concentrations. Excitatory glycine receptors are inhibited by D-serine at 100uM. In terms of biological role, component of N-methyl-D-aspartate (NMDA) receptors (NMDARs) that function as heterotetrameric, ligand-gated cation channels with high calcium permeability and voltage-dependent block by Mg(2+). NMDARs participate in synaptic plasticity for learning and memory formation by contributing to the long-term potentiation (LTP). Channel activation requires binding of the neurotransmitter L-glutamate to the GluN2 subunit, glycine or D-serine binding to the GluN1 subunit, plus membrane depolarization to eliminate channel inhibition by Mg(2+). NMDARs mediate simultaneously the potasium efflux and the influx of calcium and sodium. Each GluN2 or GluN3 subunit confers differential attributes to channel properties, including activation, deactivation and desensitization kinetics, pH sensitivity, Ca2(+) permeability, and binding to allosteric modulators. Forms excitatory glycinergic receptor complexes with GluN3 alone which are activated by glycine binding to the GluN1 and GluN3 subunits. In Rattus norvegicus (Rat), this protein is Glutamate receptor ionotropic, NMDA 1.